We begin with the raw amino-acid sequence, 141 residues long: 16 kDa protein (141 aa).

The tract at residues 97 to 119 is disordered; it reads ASATVKKSHKSKPSKKKFKERKD. A compositionally biased stretch (basic residues) spans 102–115; sequence KKSHKSKPSKKKFK.

This is 16 kDa protein from Beta vulgaris (Sugar beet).